The primary structure comprises 743 residues: Acetyl-coenzyme A synthetase, chloroplastic/glyoxysomal (743 aa).

The N-terminal 84 residues, 1 to 84 (MKIGSPSSPI…LNAVVLGESL (84 aa)), are a transit peptide targeting the chloroplast. Asp-613 is a catalytic residue.

This sequence belongs to the ATP-dependent AMP-binding enzyme family. As to expression, expressed in leaves, flower buds and young flowers.

Its subcellular location is the plastid. It localises to the chloroplast. The protein localises to the glyoxysome. The enzyme catalyses acetate + ATP + CoA = acetyl-CoA + AMP + diphosphate. In terms of biological role, catalyzes the production of acetyl-CoA, an activated form of acetate that can be used for lipid synthesis or for energy generation. May play a limited role in the biosynthesis of lipids. This chain is Acetyl-coenzyme A synthetase, chloroplastic/glyoxysomal (ACS), found in Arabidopsis thaliana (Mouse-ear cress).